The sequence spans 148 residues: Putative nickel-responsive regulator (148 aa).

The Ni(2+) site is built by His88, His99, His101, and Cys107.

This sequence belongs to the transcriptional regulatory CopG/NikR family. Requires Ni(2+) as cofactor.

In terms of biological role, transcriptional regulator. This is Putative nickel-responsive regulator from Helicobacter pylori (strain HPAG1).